A 237-amino-acid chain; its full sequence is 2-C-methyl-D-erythritol 4-phosphate cytidylyltransferase (237 aa).

The protein belongs to the IspD/TarI cytidylyltransferase family. IspD subfamily.

It catalyses the reaction 2-C-methyl-D-erythritol 4-phosphate + CTP + H(+) = 4-CDP-2-C-methyl-D-erythritol + diphosphate. It participates in isoprenoid biosynthesis; isopentenyl diphosphate biosynthesis via DXP pathway; isopentenyl diphosphate from 1-deoxy-D-xylulose 5-phosphate: step 2/6. Functionally, catalyzes the formation of 4-diphosphocytidyl-2-C-methyl-D-erythritol from CTP and 2-C-methyl-D-erythritol 4-phosphate (MEP). The sequence is that of 2-C-methyl-D-erythritol 4-phosphate cytidylyltransferase from Vibrio vulnificus (strain YJ016).